We begin with the raw amino-acid sequence, 253 residues long: Uracil-DNA glycosylase (253 aa).

Asp-79 functions as the Proton acceptor in the catalytic mechanism.

It belongs to the uracil-DNA glycosylase (UDG) superfamily. UNG family.

The protein resides in the cytoplasm. It carries out the reaction Hydrolyzes single-stranded DNA or mismatched double-stranded DNA and polynucleotides, releasing free uracil.. Its function is as follows. Excises uracil residues from the DNA which can arise as a result of misincorporation of dUMP residues by DNA polymerase or due to deamination of cytosine. The sequence is that of Uracil-DNA glycosylase from Xylella fastidiosa (strain M12).